The chain runs to 175 residues: ATP-dependent protease subunit HslV (175 aa).

The active site involves Thr-2. The Na(+) site is built by Gly-158, Cys-161, and Thr-164.

The protein belongs to the peptidase T1B family. HslV subfamily. In terms of assembly, a double ring-shaped homohexamer of HslV is capped on each side by a ring-shaped HslU homohexamer. The assembly of the HslU/HslV complex is dependent on binding of ATP.

The protein resides in the cytoplasm. The enzyme catalyses ATP-dependent cleavage of peptide bonds with broad specificity.. Its activity is regulated as follows. Allosterically activated by HslU binding. In terms of biological role, protease subunit of a proteasome-like degradation complex believed to be a general protein degrading machinery. The chain is ATP-dependent protease subunit HslV from Haemophilus influenzae (strain PittGG).